The sequence spans 30 residues: L-serine dehydratase, alpha chain (30 aa).

This sequence belongs to the iron-sulfur dependent L-serine dehydratase family. As to quaternary structure, heterodimer of an alpha chain and a beta chain. [4Fe-4S] cluster is required as a cofactor.

It catalyses the reaction L-serine = pyruvate + NH4(+). The protein operates within carbohydrate biosynthesis; gluconeogenesis. This is L-serine dehydratase, alpha chain from Anaerotignum propionicum (Clostridium propionicum).